Here is a 453-residue protein sequence, read N- to C-terminus: tRNA modification GTPase MnmE (453 aa).

(6S)-5-formyl-5,6,7,8-tetrahydrofolate-binding residues include Arg-22, Glu-79, and Lys-119. One can recognise a TrmE-type G domain in the interval 215 to 376 (GMKVVIAGRP…LKLHLKSLMG (162 aa)). Asn-225 is a binding site for K(+). GTP-binding positions include 225–230 (NAGKSS), 244–250 (TEIAGTT), 269–272 (DTAG), and 334–337 (NKAD). Ser-229 serves as a coordination point for Mg(2+). K(+) contacts are provided by Thr-244, Ile-246, and Thr-249. Thr-250 serves as a coordination point for Mg(2+). Residue Lys-453 participates in (6S)-5-formyl-5,6,7,8-tetrahydrofolate binding.

The protein belongs to the TRAFAC class TrmE-Era-EngA-EngB-Septin-like GTPase superfamily. TrmE GTPase family. As to quaternary structure, homodimer. Heterotetramer of two MnmE and two MnmG subunits. Requires K(+) as cofactor.

The protein localises to the cytoplasm. Exhibits a very high intrinsic GTPase hydrolysis rate. Involved in the addition of a carboxymethylaminomethyl (cmnm) group at the wobble position (U34) of certain tRNAs, forming tRNA-cmnm(5)s(2)U34. The protein is tRNA modification GTPase MnmE of Shewanella sp. (strain W3-18-1).